Consider the following 554-residue polypeptide: (S)-1-hydroxy-N-methylcanadine 13-hydroxylase CYP82X2 (554 aa).

The chain crosses the membrane as a helical span at residues Ile-23 to Ile-43. Cys-494 contacts heme.

It belongs to the cytochrome P450 family. Heme serves as cofactor. Highly expressed in capsules. Expressed is stems.

It localises to the membrane. The catalysed reaction is (S)-1-hydroxy-N-methylcanadine + reduced [NADPH--hemoprotein reductase] + O2 = (13S,14R)-1,13-dihydroxy-N-methylcanadine + oxidized [NADPH--hemoprotein reductase] + H2O + H(+). It functions in the pathway alkaloid biosynthesis. In terms of biological role, cytochrome P450 involved in the biosynthesis of the benzylisoquinoline alkaloid noscapine. Converts (S)-1-hydroxy-N-methylcanadine to (13S,14R)-1,13-dihydroxy-N-methylcanadine. This chain is (S)-1-hydroxy-N-methylcanadine 13-hydroxylase CYP82X2, found in Papaver somniferum (Opium poppy).